We begin with the raw amino-acid sequence, 274 residues long: 2,3,4,5-tetrahydropyridine-2,6-dicarboxylate N-succinyltransferase (274 aa).

Substrate-binding residues include Arg106 and Asp143.

The protein belongs to the transferase hexapeptide repeat family. In terms of assembly, homotrimer.

It localises to the cytoplasm. The catalysed reaction is (S)-2,3,4,5-tetrahydrodipicolinate + succinyl-CoA + H2O = (S)-2-succinylamino-6-oxoheptanedioate + CoA. Its pathway is amino-acid biosynthesis; L-lysine biosynthesis via DAP pathway; LL-2,6-diaminopimelate from (S)-tetrahydrodipicolinate (succinylase route): step 1/3. In Rickettsia prowazekii (strain Madrid E), this protein is 2,3,4,5-tetrahydropyridine-2,6-dicarboxylate N-succinyltransferase.